We begin with the raw amino-acid sequence, 272 residues long: N-acetylmuramoyl-L-alanine amidase CwlA (272 aa).

In terms of domain architecture, N-acetylmuramoyl-L-alanine amidase spans 24–142 (KAEYITIHNT…QDWNGKYCPH (119 aa)).

Belongs to the N-acetylmuramoyl-L-alanine amidase 2 family.

The enzyme catalyses Hydrolyzes the link between N-acetylmuramoyl residues and L-amino acid residues in certain cell-wall glycopeptides.. In terms of biological role, autolysins are involved in some important biological processes such as cell separation, cell-wall turnover, competence for genetic transformation, formation of the flagella and sporulation. The polypeptide is N-acetylmuramoyl-L-alanine amidase CwlA (cwlA) (Bacillus subtilis (strain 168)).